Here is a 478-residue protein sequence, read N- to C-terminus: Protein nucleotidyltransferase YdiU (478 aa).

Residues Gly-84, Gly-86, Arg-87, Lys-107, Asp-119, Gly-120, Arg-170, and Arg-177 each coordinate ATP. Asp-246 functions as the Proton acceptor in the catalytic mechanism. Residues Asn-247 and Asp-256 each coordinate Mg(2+). ATP is bound at residue Asp-256.

It belongs to the SELO family. The cofactor is Mg(2+). Requires Mn(2+) as cofactor.

The catalysed reaction is L-seryl-[protein] + ATP = 3-O-(5'-adenylyl)-L-seryl-[protein] + diphosphate. It carries out the reaction L-threonyl-[protein] + ATP = 3-O-(5'-adenylyl)-L-threonyl-[protein] + diphosphate. The enzyme catalyses L-tyrosyl-[protein] + ATP = O-(5'-adenylyl)-L-tyrosyl-[protein] + diphosphate. It catalyses the reaction L-histidyl-[protein] + UTP = N(tele)-(5'-uridylyl)-L-histidyl-[protein] + diphosphate. The catalysed reaction is L-seryl-[protein] + UTP = O-(5'-uridylyl)-L-seryl-[protein] + diphosphate. It carries out the reaction L-tyrosyl-[protein] + UTP = O-(5'-uridylyl)-L-tyrosyl-[protein] + diphosphate. Nucleotidyltransferase involved in the post-translational modification of proteins. It can catalyze the addition of adenosine monophosphate (AMP) or uridine monophosphate (UMP) to a protein, resulting in modifications known as AMPylation and UMPylation. In Escherichia coli O7:K1 (strain IAI39 / ExPEC), this protein is Protein nucleotidyltransferase YdiU.